Reading from the N-terminus, the 158-residue chain is MTDALTRIYVDADACPVKDEVYKVAERHHLPVTLVAGGFIRVPQHPLIERVAAGSGMDAADDWIAERIKPGDIVVTADIPLASRCVKAGATAIAPNGKPFTEESIGMTLAVRNLMTDLRSTGEITGGPRAFSPRDRSTFLSALDSAIRRIARRRAAPT.

This sequence belongs to the UPF0178 family.

This Rhodopseudomonas palustris (strain ATCC BAA-98 / CGA009) protein is UPF0178 protein RPA2191.